Reading from the N-terminus, the 298-residue chain is MNPGYRGRFAPSPTGPLHFGSLVGALASWLDARAHGGTWLVRIEDLDGPRTVPGAADDILAMLAHFGMTPDEPPVWQSTRDAAYTAALEQLVAAGLVYPCGCTRKEIADSLRAAHERHTTLAYPGTCRTGLHGKPARAWRLRVPDGCDAVVTFDDRWQHTQSQNLATEVGDFVLKRADGQWAYQLAVVFDDADAGITHVVRGADLLDSTARQIYLQRCLGVPTPEYLHVPVVVDANGEKLSKQTGATALERNDPLPALQAAAAHLGLANDGDLPGGTLDAFYTAATDAWARRFGPRAG.

Residues Arg8–Ser12 and Glu44 each bind L-glutamate. The 'HIGH' region motif lies at Pro11–Ser21. Zn(2+)-binding residues include Cys100, Cys102, Tyr123, and Cys127. Tyr183 and Arg201 together coordinate L-glutamate. Residues Lys239–Gln243 carry the 'KMSKS' region motif. Lys242 lines the ATP pocket.

This sequence belongs to the class-I aminoacyl-tRNA synthetase family. GluQ subfamily. It depends on Zn(2+) as a cofactor.

In terms of biological role, catalyzes the tRNA-independent activation of glutamate in presence of ATP and the subsequent transfer of glutamate onto a tRNA(Asp). Glutamate is transferred on the 2-amino-5-(4,5-dihydroxy-2-cyclopenten-1-yl) moiety of the queuosine in the wobble position of the QUC anticodon. The protein is Glutamyl-Q tRNA(Asp) synthetase of Burkholderia orbicola (strain MC0-3).